The chain runs to 492 residues: Steroid 21-hydroxylase (492 aa).

Heme b is bound by residues Arg91 and Lys120. Arg231 contributes to the 17alpha-hydroxyprogesterone binding site. Position 231 (Arg231) interacts with progesterone. Heme b contacts are provided by His363, Arg424, and Cys426.

Belongs to the cytochrome P450 family. Requires heme b as cofactor.

Its subcellular location is the endoplasmic reticulum membrane. It is found in the microsome membrane. The enzyme catalyses 17alpha-hydroxyprogesterone + reduced [NADPH--hemoprotein reductase] + O2 = 11-deoxycortisol + oxidized [NADPH--hemoprotein reductase] + H2O + H(+). It catalyses the reaction progesterone + reduced [NADPH--hemoprotein reductase] + O2 = 21-hydroxyprogesterone + oxidized [NADPH--hemoprotein reductase] + H2O + H(+). Specifically catalyzes the 21-hydroxylation of steroids. Required for the adrenal synthesis of mineralocorticoids and glucocorticoids. This Canis lupus familiaris (Dog) protein is Steroid 21-hydroxylase (CYP21).